The chain runs to 764 residues: Irregular chiasm C-roughest protein (764 aa).

Positions 1 to 19 (MLHTMQLLLLATIVGMVRS) are cleaved as a signal peptide. The Extracellular segment spans residues 20-533 (SPYTSYQNQR…QAKKSVSLLM (514 aa)). Ig-like C2-type domains follow at residues 21–120 (PYTS…PAIR), 132–230 (PEAP…AKIR), 237–343 (PKVK…LDIS), 346–419 (PSFR…AEIS), and 430–530 (PAIG…KSVS). Cystine bridges form between Cys-49/Cys-107, Cys-155/Cys-214, Cys-281/Cys-325, Cys-367/Cys-408, and Cys-450/Cys-508. Residues Asn-211, Asn-313, Asn-393, Asn-400, and Asn-507 are each glycosylated (N-linked (GlcNAc...) asparagine). A helical membrane pass occupies residues 534–556 (TIVGGISVVAFLLVLTILVVVYI). At 557–764 (KCKKRTKLPP…SSLLPPPTAV (208 aa)) the chain is on the cytoplasmic side. Disordered stretches follow at residues 640 to 660 (HQNQ…HHTQ) and 691 to 719 (NGLP…STTA). Positions 692-701 (GLPSLQSTTA) are enriched in polar residues. Residues 702 to 719 (SVVSSSPNGSCSNQSTTA) are compositionally biased toward low complexity.

Postembryonic expression is strong in the developing optic lobe and in the eye imaginal disk.

It localises to the membrane. Its function is as follows. Required for correct axonal pathway formation in the optic lobe and for programmed cell death in the developing retina. In Drosophila melanogaster (Fruit fly), this protein is Irregular chiasm C-roughest protein (rst).